Reading from the N-terminus, the 206-residue chain is 2-phospho-L-lactate guanylyltransferase (206 aa).

This sequence belongs to the CofC family. In terms of assembly, homodimer.

The catalysed reaction is (2S)-2-phospholactate + GTP + H(+) = (2S)-lactyl-2-diphospho-5'-guanosine + diphosphate. The protein operates within cofactor biosynthesis; coenzyme F420 biosynthesis. In terms of biological role, guanylyltransferase that catalyzes the activation of (2S)-2-phospholactate (2-PL) as (2S)-lactyl-2-diphospho-5'-guanosine, via the condensation of 2-PL with GTP. It is involved in the biosynthesis of coenzyme F420, a hydride carrier cofactor. This Archaeoglobus fulgidus (strain ATCC 49558 / DSM 4304 / JCM 9628 / NBRC 100126 / VC-16) protein is 2-phospho-L-lactate guanylyltransferase.